The chain runs to 212 residues: uncharacterized protein (212 aa).

Gly53, Glu74, and Asp97 together coordinate S-adenosyl-L-methionine.

The protein belongs to the methyltransferase superfamily. YrrT family.

In terms of biological role, could be a S-adenosyl-L-methionine-dependent methyltransferase. This is an uncharacterized protein from Bacillus cereus (strain 03BB102).